A 403-amino-acid polypeptide reads, in one-letter code: MTTVSCDKDENKVDQLGESLSQLRISTRKNNKPSQKKGSLVLSCKKFPHVSVNYVVDKTPKLLTDCKEVHNCSYIINDATLLWNEASRKPRLRPEVCTYIKDSKWENKAVKDSFIGIDLTKGYDDYVPLDRNVLNSLVILKEAYQRYEKTLNPEKTTFVSLRHHIIDIIMCPFLDEPLSLLMTVQPDKNILISVDKSKDKPNGIHETRNSFNKKICYTGFALEDLLIESPTEGHILEHELYYSIVHGSLNDEIDLLIQAEMDSINTLTDTYTEIKSSVHFKLGNTYHRRKLLRMWIQTNLLPKSDLLIGFRNSYSNELEQLKAYKIQDIYHKINNSSIVGKPGKFYKFNPNVANDWFQHIFQVLKQNLLLLSQESTSTTFKVQIDTNLTLSISPASQFVTALG.

E223 serves as a coordination point for a divalent metal cation. Residue E260 participates in substrate binding. A divalent metal cation-binding residues include D262, E273, and I274. Residues K275 and Q297 each coordinate substrate.

It belongs to the DXO/Dom3Z family. It depends on a divalent metal cation as a cofactor.

The protein resides in the cytoplasm. It carries out the reaction a 5'-end NAD(+)-phospho-ribonucleoside in mRNA + H2O = a 5'-end phospho-ribonucleoside in mRNA + NAD(+) + H(+). The enzyme catalyses a 5'-end (N(7)-methyl 5'-triphosphoguanosine)-ribonucleoside-ribonucleotide in mRNA + H2O = a (N(7)-methyl 5'-triphosphoguanosine)-nucleoside + a 5'-end phospho-ribonucleoside in mRNA + H(+). Its function is as follows. Decapping enzyme for NAD-capped RNAs: specifically hydrolyzes the nicotinamide adenine dinucleotide (NAD) cap from a subset of RNAs by removing the entire NAD moiety from the 5'-end of an NAD-capped RNA. The NAD-cap is present at the 5'-end of some RNAs and snoRNAs. In contrast to the canonical 5'-end N7 methylguanosine (m7G) cap, the NAD cap promotes mRNA decay. Also acts as a non-canonical decapping enzyme that removes the entire cap structure of m7G capped or incompletely capped RNAs and mediates their subsequent degradation. Has decapping and 5'-3' exonuclease activities. Has decapping activity toward incomplete 5'-end cap mRNAs such as unmethylated 5'-end-capped RNA to release GpppN and 5'-end monophosphate RNA. The 5'-end monophosphate RNA is then degraded by the 5'-3' exoribonuclease activity, enabling this enzyme to decap and degrade incompletely capped mRNAs. This is Decapping and exoribonuclease protein 1 from Kluyveromyces lactis (strain ATCC 8585 / CBS 2359 / DSM 70799 / NBRC 1267 / NRRL Y-1140 / WM37) (Yeast).